The primary structure comprises 188 residues: GTP cyclohydrolase 1 (188 aa).

Zn(2+) contacts are provided by C73, H76, and C144.

This sequence belongs to the GTP cyclohydrolase I family. Homomer.

The catalysed reaction is GTP + H2O = 7,8-dihydroneopterin 3'-triphosphate + formate + H(+). It functions in the pathway cofactor biosynthesis; 7,8-dihydroneopterin triphosphate biosynthesis; 7,8-dihydroneopterin triphosphate from GTP: step 1/1. This is GTP cyclohydrolase 1 from Caldivirga maquilingensis (strain ATCC 700844 / DSM 13496 / JCM 10307 / IC-167).